The primary structure comprises 64 residues: Conotoxin Ts-011 (64 aa).

A signal peptide spans 1-22 (MHCLPVLVILLLLIASTPSVDA). Residues 23–51 (RPKTKDDVPLASFHGADNANRILRTLWNL) constitute a propeptide that is removed on maturation. Ile63 is modified (isoleucine amide).

This sequence belongs to the conotoxin T superfamily. Contains 2 disulfide bonds that can be either 'C1-C3, C2-C4' or 'C1-C4, C2-C3', since these disulfide connectivities have been observed for conotoxins with cysteine framework V (for examples, see AC P0DQQ7 and AC P81755). Expressed by the venom duct.

It localises to the secreted. This chain is Conotoxin Ts-011, found in Conus tessulatus (Tessellate cone).